We begin with the raw amino-acid sequence, 285 residues long: MENEINYWGVPDSPIDWCEENYIISKYICEFYNTFSSFIITAFGVYGIFLMMSASSRDQALFQHVKIMKELKIRQKVLFSYLSLAIVGVGSAFYHATLLYKNQLFDEFPMMLTASMFVYCILTIDPVDEKNDTATYKLMRRFLPYILSLYVIVVAITITIIRDSPIILQSSFGLLIFSNVFLSYMYTSRCLKTPVMESNPKKFLYLCIASMGIAYISWLTERKLCNNGYVIPGVQLHAVWHALTGLAGFYYIQFFITSCLEKHGYKTKLNWNYGIASVRGFIKSY.

The next 3 membrane-spanning stretches (helical) occupy residues Thr-34–Ala-54, Val-77–Thr-97, and Leu-104–Ile-124. The N-linked (GlcNAc...) asparagine glycan is linked to Asn-131. 4 helical membrane passes run Arg-141–Ile-161, Ile-166–Tyr-186, Pro-200–Thr-220, and Leu-236–Ile-256.

This sequence belongs to the alkaline ceramidase family.

Its subcellular location is the membrane. In Dictyostelium discoideum (Social amoeba), this protein is Putative alkaline ceramidase dcd3B (dcd3B).